The sequence spans 3344 residues: Genome polyprotein (3344 aa).

Residues 408 to 547 (IVGNSKINYI…RSVYAKMDQY (140 aa)) enclose the Peptidase S30 domain. Catalysis depends on for P1 proteinase activity residues histidine 456, aspartate 465, and serine 499. Residues 598-601 (KITC) carry the Involved in interaction with stylet and aphid transmission motif. The short motif at 856 to 858 (PTK) is the Involved in virions binding and aphid transmission element. The Peptidase C6 domain occupies 882–1004 (MYIAKKGYCY…DSEMKHYIVG (123 aa)). Active-site for helper component proteinase activity residues include cysteine 890 and histidine 963. The region spanning 1473 to 1625 (EIAHSPEREF…TQFPTKIVTE (153 aa)) is the Helicase ATP-binding domain. 1486–1493 (GAVGSGKS) contributes to the ATP binding site. The short motif at 1575-1578 (DECH) is the DECH box element. A Helicase C-terminal domain is found at 1644–1803 (DVTAFADNIL…GLPVMTHNVG (160 aa)). A Nuclear localization signal motif is present at residues 2134–2141 (KKGNKKGK). Residue tyrosine 2156 is modified to O-(5'-phospho-RNA)-tyrosine. Residues 2283 to 2499 (GKSLCQGMRN…LSWGALKVWE (217 aa)) form the Peptidase C4 domain. Active-site for nuclear inclusion protein A activity residues include histidine 2327, aspartate 2362, and cysteine 2431. One can recognise a RdRp catalytic domain in the interval 2761-2885 (WVYCDADGSQ…AIHPDHEHVL (125 aa)). The span at 3059 to 3093 (KNEAVDAGLNEKLKEKEKQKEKEKEKQKEKEKDGA) shows a compositional bias: basic and acidic residues. Residues 3059–3116 (KNEAVDAGLNEKLKEKEKQKEKEKEKQKEKEKDGASDGNDVSTSTKTGERDRDVNVGT) form a disordered region.

Belongs to the potyviridae genome polyprotein family. In terms of assembly, interacts with host eIF4E protein (via cap-binding region); this interaction mediates the translation of the VPg-viral RNA conjugates. Part of a complex that comprises VPg, RNA, host EIF4E and EIF4G; this interaction mediates the translation of the VPg-viral RNA conjugates. In terms of processing, VPg is uridylylated by the polymerase and is covalently attached to the 5'-end of the genomic RNA. This uridylylated form acts as a nucleotide-peptide primer for the polymerase. Potyviral RNA is expressed as two polyproteins which undergo post-translational proteolytic processing. Genome polyprotein is processed by NIa-pro, P1 and HC-pro proteinases resulting in the production of at least ten individual proteins. P3N-PIPO polyprotein is cleaved by P1 and HC-pro proteinases resulting in the production of three individual proteins. The P1 proteinase and the HC-pro cleave only their respective C-termini autocatalytically. 6K1 is essential for proper proteolytic separation of P3 from CI.

The protein localises to the host cytoplasmic vesicle. It localises to the host nucleus. The protein resides in the virion. The catalysed reaction is RNA(n) + a ribonucleoside 5'-triphosphate = RNA(n+1) + diphosphate. It carries out the reaction Hydrolyzes glutaminyl bonds, and activity is further restricted by preferences for the amino acids in P6 - P1' that vary with the species of potyvirus, e.g. Glu-Xaa-Xaa-Tyr-Xaa-Gln-|-(Ser or Gly) for the enzyme from tobacco etch virus. The natural substrate is the viral polyprotein, but other proteins and oligopeptides containing the appropriate consensus sequence are also cleaved.. It catalyses the reaction Hydrolyzes a Gly-|-Gly bond at its own C-terminus, commonly in the sequence -Tyr-Xaa-Val-Gly-|-Gly, in the processing of the potyviral polyprotein.. In terms of biological role, required for aphid transmission and also has proteolytic activity. Only cleaves a Gly-Gly dipeptide at its own C-terminus. Interacts with virions and aphid stylets. Acts as a suppressor of RNA-mediated gene silencing, also known as post-transcriptional gene silencing (PTGS), a mechanism of plant viral defense that limits the accumulation of viral RNAs. May have RNA-binding activity. Functionally, has helicase activity. It may be involved in replication. Indispensable for virus replication. Its function is as follows. Mediates the cap-independent, EIF4E-dependent translation of viral genomic RNAs. Binds to the cap-binding site of host EIF4E and thus interferes with the host EIF4E-dependent mRNA export and translation. VPg-RNA directly binds EIF4E and is a template for transcription. Also forms trimeric complexes with EIF4E-EIF4G, which are templates for translation. In terms of biological role, has RNA-binding and proteolytic activities. Functionally, an RNA-dependent RNA polymerase that plays an essential role in the virus replication. Involved in aphid transmission, cell-to-cell and systemis movement, encapsidation of the viral RNA and in the regulation of viral RNA amplification. In Carica papaya (Papaya), this protein is Genome polyprotein.